The chain runs to 493 residues: Probable glycine dehydrogenase (decarboxylating) subunit 2 (493 aa).

Position 269 is an N6-(pyridoxal phosphate)lysine (K269).

It belongs to the GcvP family. C-terminal subunit subfamily. As to quaternary structure, the glycine cleavage system is composed of four proteins: P, T, L and H. In this organism, the P 'protein' is a heterodimer of two subunits. Pyridoxal 5'-phosphate is required as a cofactor.

It catalyses the reaction N(6)-[(R)-lipoyl]-L-lysyl-[glycine-cleavage complex H protein] + glycine + H(+) = N(6)-[(R)-S(8)-aminomethyldihydrolipoyl]-L-lysyl-[glycine-cleavage complex H protein] + CO2. In terms of biological role, the glycine cleavage system catalyzes the degradation of glycine. The P protein binds the alpha-amino group of glycine through its pyridoxal phosphate cofactor; CO(2) is released and the remaining methylamine moiety is then transferred to the lipoamide cofactor of the H protein. In Chloroherpeton thalassium (strain ATCC 35110 / GB-78), this protein is Probable glycine dehydrogenase (decarboxylating) subunit 2.